The primary structure comprises 338 residues: DNA-directed RNA polymerase subunit alpha (338 aa).

The tract at residues 1–234 is alpha N-terminal domain (alpha-NTD); that stretch reads MIHKNWAELI…DQLSIFVNFD (234 aa). The alpha C-terminal domain (alpha-CTD) stretch occupies residues 250–338; that stretch reads FNPLLLKKVD…DLAKKFEDAF (89 aa).

This sequence belongs to the RNA polymerase alpha chain family. Homodimer. The RNAP catalytic core consists of 2 alpha, 1 beta, 1 beta' and 1 omega subunit. When a sigma factor is associated with the core the holoenzyme is formed, which can initiate transcription.

It catalyses the reaction RNA(n) + a ribonucleoside 5'-triphosphate = RNA(n+1) + diphosphate. In terms of biological role, DNA-dependent RNA polymerase catalyzes the transcription of DNA into RNA using the four ribonucleoside triphosphates as substrates. This is DNA-directed RNA polymerase subunit alpha from Ruegeria pomeroyi (strain ATCC 700808 / DSM 15171 / DSS-3) (Silicibacter pomeroyi).